Reading from the N-terminus, the 787-residue chain is Transcriptional corepressor LEUNIG_HOMOLOG (787 aa).

Residues 1 to 88 (MAQSNWEADK…IEAQQGKAKE (88 aa)) form a required for SEU-binding region. The region spanning 8–40 (ADKMLDVYIYDYLVKKKLHNTAKSFMTEGKVSP) is the LisH domain. The stretch at 77–106 (AYIEAQQGKAKEQQMQIQQLQMMRQAQMQR) forms a coiled coil. Positions 299-413 (NMTNSPMYGG…TPSTHTPVDG (115 aa)) are disordered. Low complexity-rich tracts occupy residues 336 to 346 (SIGSPMQSSSS) and 355 to 372 (QQSSSQQQDHLLSQQSQQ). Polar residues predominate over residues 380 to 409 (PSSSGPANSTGTGNTVGPSNSQPSTPSTHT). 7 WD repeats span residues 508-547 (KSASKVICCSFSYDGKLLASAGHDKKVFIWNMETLQVEST), 550-589 (EHAHIITDVRFRPNSTQLATSSFDKTIKIWDASDPGYFLR), 593-633 (GHAA…VRAV), 635-671 (GASTQVRFQPRTGQFLAAASENTVSIFDIENNNKRVN), 675-715 (GHSS…HELS), 717-755 (SGNKFHSVVFHPSYPDLLVIGGYQAIELWNTMENKCMTV), and 757-787 (GHECVISALAQSPSTGVVASASHDKSVKIWK).

As to quaternary structure, forms corepressor complexes with SLK1 and SLK2; LUH is the transcription repressor subunit and SLK1 and SLK2 the specific DNA-binding adapters. Interacts with SEU. Binds to YAB3, YAB5 and YAB1/FIL; these complexes promote adaxial cell identity in leaves as well as embryonic shoot apical meristem (SAM) initiation and postembryonic SAM maintenance. In terms of tissue distribution, expressed in roots, stems, leaves, seedlings, apex, flowers, siliques, flower organs and seeds (including seed coat).

Its subcellular location is the nucleus. Transcription repressor subunit of the SEU-SLK1 and SEU-SLK2 transcriptional corepressor of abiotic stress (e.g. salt and osmotic stress) response genes, by means of an epigenetic process involving histone modification (e.g. H3K9 and H3K14 acetylation), probably by recruiting HDAC, to facilitate the condensation of chromatin thus preventing transcription at the target genes. Can also act as a transcription activator. Implicated in embryo and floral development. Involved in post-synthesis cell wall modifications necessary for mucilage extrusion from seeds upon imbibition, probably by promoting the expression of genes required for mucilage maturation (e.g. MUM2). Regulates the maintenance on leaf polarity and meristem activity as well as the initiation of embryonic shoot apical meristem (SAM) development. This Arabidopsis thaliana (Mouse-ear cress) protein is Transcriptional corepressor LEUNIG_HOMOLOG.